The following is a 100-amino-acid chain: Integration host factor subunit alpha (100 aa).

The protein belongs to the bacterial histone-like protein family. Heterodimer of an alpha and a beta chain.

Its function is as follows. This protein is one of the two subunits of integration host factor, a specific DNA-binding protein that functions in genetic recombination as well as in transcriptional and translational control. The protein is Integration host factor subunit alpha of Jannaschia sp. (strain CCS1).